Consider the following 881-residue polypeptide: DNA mismatch repair protein MutS (881 aa).

Glycine 632–serine 639 contributes to the ATP binding site.

This sequence belongs to the DNA mismatch repair MutS family.

Its function is as follows. This protein is involved in the repair of mismatches in DNA. It is possible that it carries out the mismatch recognition step. This protein has a weak ATPase activity. The protein is DNA mismatch repair protein MutS of Acinetobacter baylyi (strain ATCC 33305 / BD413 / ADP1).